Here is a 162-residue protein sequence, read N- to C-terminus: Large ribosomal subunit protein uL10 (162 aa).

It belongs to the universal ribosomal protein uL10 family. As to quaternary structure, part of the ribosomal stalk of the 50S ribosomal subunit. The N-terminus interacts with L11 and the large rRNA to form the base of the stalk. The C-terminus forms an elongated spine to which L12 dimers bind in a sequential fashion forming a multimeric L10(L12)X complex.

In terms of biological role, forms part of the ribosomal stalk, playing a central role in the interaction of the ribosome with GTP-bound translation factors. The polypeptide is Large ribosomal subunit protein uL10 (Borrelia recurrentis (strain A1)).